Here is a 1307-residue protein sequence, read N- to C-terminus: Cyclic nucleotide-gated channel beta-1 (1307 aa).

Disordered stretches follow at residues 1 to 101, 126 to 178, 193 to 262, 320 to 458, 470 to 625, and 648 to 681; these read MLGW…AQVA, QPVY…TEPS, LPQP…PGDP, DSCW…LDSC, LERA…SQNS, and EKLI…KPAE. Residues 1–720 lie on the Cytoplasmic side of the membrane; it reads MLGWVQRVLP…SIDPLTNLMY (720 aa). Residues 43-59 show a composition bias toward acidic residues; it reads VQPEPEPEPEPAPEEAA. Residues 165-174 show a composition bias toward basic and acidic residues; sequence GSDKTSKTQD. Over residues 361–386 the composition is skewed to acidic residues; that stretch reads QEEEEEEKEEKEEKEEEEEKEEEEKR. The segment covering 387–406 has biased composition (basic and acidic residues); sequence EEEKKKEKEEEKKEKEKEEK. 2 stretches are compositionally biased toward acidic residues: residues 407 to 451 and 483 to 518; these read EEKE…EEEP and LPEE…EEGE. A compositionally biased stretch (pro residues) spans 550–560; that stretch reads TIPPPERPPVS. A calmodulin-binding CaM1 region spans residues 621 to 631; that stretch reads ASQNSAIINDR. Residues 721 to 742 form a helical membrane-spanning segment; it reads ILWLFFVVLAWNWNCWLIPVRW. Over 743–751 the chain is Extracellular; that stretch reads AFPYQRADN. The helical transmembrane segment at 752–773 threads the bilayer; that stretch reads IHLWLLMDYLCDFIYLLDITVF. Residues 774 to 788 lie on the Cytoplasmic side of the membrane; it reads QMRLQFVKGGDIITD. A helical transmembrane segment spans residues 789–808; it reads KKEMRNNYLKSQRFKMDLLC. Residues 809-824 lie on the Extracellular side of the membrane; that stretch reads LLPLDFLYLKLGVNPL. A helical transmembrane segment spans residues 825-837; sequence LRLPRCLKYMAFF. Over 838 to 849 the chain is Cytoplasmic; sequence EFNNRLEAILSK. A helical transmembrane segment spans residues 850–872; the sequence is AYVYRVIRTTAYLLYSLHLNSCL. Residues 850–949 form an ion conduction pathway region; it reads AYVYRVIRTT…IGQMRDVVGA (100 aa). Topologically, residues 873–895 are extracellular; the sequence is YYWASAFQGIGSTHWVYDGVGNS. Helical transmembrane passes span 896–922 and 923–948; these read YIRC…LFEI and VFQL…DVVG. Residues 949-1307 are Cytoplasmic-facing; it reads AATAGQTYYR…MLEEKKEEVE (359 aa). Residues 952-1028 form a C-linker region; that stretch reads AGQTYYRSCM…NIVSKVALFQ (77 aa). The interval 1026–1130 is cNMP-binding domain; sequence LFQGCDRQMI…LDKKDLNEIL (105 aa). Residues 1032 to 1148 are cyclic nucleotide-binding domain; it reads RQMIFDMLKR…LLRKKARRML (117 aa). 3',5'-cyclic GMP is bound by residues Gly1093, Glu1094, Ser1096, Arg1106, and Thr1107. Arg1106 provides a ligand contact to 3',5'-cyclic AMP. The segment at 1212–1218 is calmodulin-binding CaM2; it reads QQQLLEQ. Residues 1214–1238 show a composition bias toward low complexity; the sequence is QLLEQAKSSQEAGGEEGSGATDQPA. A disordered region spans residues 1214–1307; the sequence is QLLEQAKSSQ…MLEEKKEEVE (94 aa). The segment covering 1250-1261 has biased composition (pro residues); it reads EPPAPSSPPPAS.

It belongs to the cyclic nucleotide-gated cation channel (TC 1.A.1.5) family. CNGB1 subfamily. As to quaternary structure, the rod cyclic nucleotide-gated channel is a heterotetramer composed of CNGA1 and CNGB1 subunits with 3:1 stoichiometry. CNGA1:CNGB1 channel binds Ca(2+)-bound CALM1 via CaM1 and CaM2 regions of the CNGB1 subunit; this interaction modulates the affinity of the channel for cNMPs in response to intracellular Ca(2+) levels. In terms of assembly, the olfactory cyclic nucleotide-gated channel is a heterotetramer composed of CNGA2, CNGA4 and CNGB1b subunits with 2:1:1 stoichiometry. As to expression, expressed in olfactory sensory cilia (at protein level).

The protein resides in the cell projection. Its subcellular location is the cilium membrane. It carries out the reaction Ca(2+)(in) = Ca(2+)(out). The enzyme catalyses Na(+)(in) = Na(+)(out). The catalysed reaction is K(+)(in) = K(+)(out). It catalyses the reaction NH4(+)(in) = NH4(+)(out). It carries out the reaction Rb(+)(in) = Rb(+)(out). The enzyme catalyses Li(+)(in) = Li(+)(out). The catalysed reaction is Cs(+)(in) = Cs(+)(out). In terms of biological role, pore-forming subunit of the rod cyclic nucleotide-gated channel. Mediates rod photoresponses at dim light converting transient changes in intracellular cGMP levels into electrical signals. In the dark, cGMP levels are high and keep the channel open enabling a steady inward current carried by Na(+) and Ca(2+) ions that leads to membrane depolarization and neurotransmitter release from synaptic terminals. Upon photon absorption cGMP levels decline leading to channel closure and membrane hyperpolarization that ultimately slows neurotransmitter release and signals the presence of light, the end point of the phototransduction cascade. Conducts cGMP- and cAMP-gated ion currents, with permeability for monovalent and divalent cations. The selectivity for Ca(2+) over Na(+) increases with cGMP concentrations, whereas the selectivity among monovalent ions is independent of the cGMP levels. Functionally, pore-forming subunit of the olfactory cyclic nucleotide-gated channel. Operates in the cilia of olfactory sensory neurons where chemical stimulation of the odorant is converted to an electrical signal. Mediates odorant-induced cAMP-dependent Ca(2+) influx triggering neuron depolarization. The rise of intracellular Ca(2+) levels potentiates the olfactory response by activating Ca(2+)-dependent Cl(-) channels, but it also serves as a negative feedback signal to desensitize the channel for rapid adaptation to odorants. The sequence is that of Cyclic nucleotide-gated channel beta-1 from Rattus norvegicus (Rat).